Here is a 171-residue protein sequence, read N- to C-terminus: Photosystem I assembly protein Ycf3 (171 aa).

TPR repeat units follow at residues 35-68 (AFTY…EIDP), 72-105 (SYIL…NPSL), and 120-153 (GEQA…APNN).

The protein belongs to the Ycf3 family.

Its subcellular location is the plastid. It localises to the chloroplast thylakoid membrane. Essential for the assembly of the photosystem I (PSI) complex. May act as a chaperone-like factor to guide the assembly of the PSI subunits. This Psilotum nudum (Whisk fern) protein is Photosystem I assembly protein Ycf3.